Consider the following 193-residue polypeptide: Oligoribonuclease (193 aa).

The Exonuclease domain occupies 20–183; it reads FVWLDCEMTG…ADVHESIEEL (164 aa). Residue Tyr-141 is part of the active site.

It belongs to the oligoribonuclease family.

The protein localises to the cytoplasm. In terms of biological role, 3'-to-5' exoribonuclease specific for small oligoribonucleotides. This chain is Oligoribonuclease, found in Paracidovorax citrulli (strain AAC00-1) (Acidovorax citrulli).